Consider the following 621-residue polypeptide: UvrABC system protein C (621 aa).

The GIY-YIG domain occupies 13–92 (NEPGVYLMKN…IKKYSPKYNI (80 aa)). One can recognise a UVR domain in the interval 204–239 (RSLLNKLKEEMQSASGNLEFEKAASLRDKMIAIENI).

Belongs to the UvrC family. Interacts with UvrB in an incision complex.

The protein localises to the cytoplasm. In terms of biological role, the UvrABC repair system catalyzes the recognition and processing of DNA lesions. UvrC both incises the 5' and 3' sides of the lesion. The N-terminal half is responsible for the 3' incision and the C-terminal half is responsible for the 5' incision. This Clostridium beijerinckii (strain ATCC 51743 / NCIMB 8052) (Clostridium acetobutylicum) protein is UvrABC system protein C.